A 437-amino-acid chain; its full sequence is GTPase Obg (437 aa).

Residues 2–160 (SMFLDTAKIK…RNLELELKVL (159 aa)) enclose the Obg domain. One can recognise an OBG-type G domain in the interval 161-338 (ADVGLVGFPS…LLEATAELLE (178 aa)). GTP is bound by residues 167 to 174 (GFPSVGKS), 192 to 196 (FTTIV), 214 to 217 (DLPG), 284 to 287 (NKMD), and 319 to 321 (SGI). Mg(2+) contacts are provided by Ser174 and Thr194. The OCT domain occupies 359-437 (GFNPDEPEFA…IGKFEFEFVD (79 aa)).

It belongs to the TRAFAC class OBG-HflX-like GTPase superfamily. OBG GTPase family. Monomer. The cofactor is Mg(2+).

It is found in the cytoplasm. In terms of biological role, an essential GTPase which binds GTP, GDP and possibly (p)ppGpp with moderate affinity, with high nucleotide exchange rates and a fairly low GTP hydrolysis rate. Plays a role in control of the cell cycle, stress response, ribosome biogenesis and in those bacteria that undergo differentiation, in morphogenesis control. This is GTPase Obg from Streptococcus suis (strain 98HAH33).